A 1976-amino-acid polypeptide reads, in one-letter code: Myosin-10 (1976 aa).

Residue R18 is modified to Omega-N-methylarginine. The 51-residue stretch at 31–81 (TAKKLVWIPSERHGFEAASIKEERGDEVMVELAENGKKAMVNKDDIQKMNP) folds into the Myosin N-terminal SH3-like domain. One can recognise a Myosin motor domain in the interval 85–783 (SKVEDMAELT…VLAHLEEERD (699 aa)). 178-185 (GESGAGKT) contributes to the ATP binding site. L214 is subject to Phosphoserine. K442 carries the N6-acetyllysine modification. Residues 661 to 683 (LTKLMATLRNTNPNFVRCIIPNH) form an actin-binding region. The IQ domain occupies 786–815 (ITDIIIFFQAVCRGYLARKAFAKKQQQLSA). Residues 845-1976 (LQVTRQEEEL…VNETQPPQSE (1132 aa)) adopt a coiled-coil conformation. The disordered stretch occupies residues 1127 to 1147 (FESEKASRNKAEKQKRDLSEE). Over residues 1129–1147 (SEKASRNKAEKQKRDLSEE) the composition is skewed to basic and acidic residues. At S1145 the chain carries Phosphoserine. 3 positions are modified to N6-acetyllysine: K1241, K1301, and K1645. Disordered stretches follow at residues 1697–1728 (ASSE…SALL) and 1872–1976 (MEKA…PQSE). A compositionally biased stretch (basic and acidic residues) spans 1698 to 1708 (SSERARRHAEQ). Omega-N-methylarginine is present on R1930. S1935, S1937, S1938, and S1939 each carry phosphoserine. The residue at position 1940 (R1940) is an Omega-N-methylarginine. Phosphoserine is present on residues S1952 and S1956. The residue at position 1960 (T1960) is a Phosphothreonine. Polar residues predominate over residues 1967–1976 (VNETQPPQSE). S1975 is modified (phosphoserine).

This sequence belongs to the TRAFAC class myosin-kinesin ATPase superfamily. Myosin family. As to quaternary structure, myosin is a hexameric protein that consists of 2 heavy chain subunits (MHC), 2 alkali light chain subunits (MLC) and 2 regulatory light chain subunits (MLC-2). Interacts with PLEKHG6. Interacts with ECPAS. Interacts with KIF26B. Interacts with LARP6. Interacts with MCC. Interacts with CFAP95. (Microbial infection) Interacts with herpes simplex virus 1/HHV-1 envelope glycoprotein B. Post-translationally, phosphorylated by ABL2. In terms of tissue distribution, isoform 1 is expressed in cerebellum and spinal chord. Isoform 2 is expressed in cerebrum and retina. Isoform 3 is expressed in the cerebrum and to a much lower extent in cerebellum.

Its subcellular location is the cell projection. It is found in the lamellipodium. The protein resides in the cell membrane. Its function is as follows. Cellular myosin that appears to play a role in cytokinesis, cell shape, and specialized functions such as secretion and capping. Involved with LARP6 in the stabilization of type I collagen mRNAs for CO1A1 and CO1A2. During cell spreading, plays an important role in cytoskeleton reorganization, focal contacts formation (in the central part but not the margins of spreading cells), and lamellipodial extension; this function is mechanically antagonized by MYH9. (Microbial infection) Acts as a receptor for herpes simplex virus 1/HHV-1 envelope glycoprotein B. This is Myosin-10 (MYH10) from Homo sapiens (Human).